We begin with the raw amino-acid sequence, 344 residues long: RNA-binding protein squid (344 aa).

The interval Met-1–Asp-55 is disordered. A compositionally biased stretch (polar residues) spans Gly-36–Ser-49. 2 consecutive RRM domains span residues Arg-56–Ile-138 and Gly-136–Pro-213. Ser-148 carries the phosphoserine modification. Disordered stretches follow at residues Lys-214 to Tyr-238 and Gly-301 to Tyr-344. The segment at Pro-215–Tyr-254 is M9-like motif. 2 stretches are compositionally biased toward gly residues: residues Gly-222–Tyr-238 and Gly-301–Arg-337. The segment at Gly-300–Gln-338 is M9 motif.

As to quaternary structure, interacts with bru1/Bruno; the interaction is direct but weak, and may play a role in regulation of grk mRNA localization and translation. In terms of assembly, interacts (probably via M9 and M9-like motifs) with Tnpo/Transportin; the interaction is direct and is involved in nuclear localization. Interacts with fs(1)K10 (via N-terminus); may be involved in localization of sqd in the oocyte during oogenesis. Interacts (via C-terminus) with Hrb27C; the interaction is RNA dependent. Does not interact with Tnpo/Transportin. Interacts with fs(1)K10 (via N-terminus); may be involved in localization of sqd in the oocyte during oogenesis. As to quaternary structure, interacts (probably via M9-like motif) with Tnpo/Transportin; the interaction is direct and is involved in nuclear localization. Interacts with fs(1)K10 (via N-terminus); may be involved in localization of sqd in the oocyte during oogenesis.

It localises to the nucleus. It is found in the cytoplasm. In terms of biological role, component of ribonucleosomes. Could be needed to organize a concentration gradient of a dorsalizing morphogen (Dm) originating in the germinal vesicle. At least one of the isoforms is essential in somatic tissues. Interacts with grk mRNA (via 3' UTR) and involved in its localization to the dorsal anterior region of the oocyte during dorsal-ventral axis determination; may function as a ribonuclear protein complex together with otu and Hrb27C. Required for polytene chromosome dispersal in nurse cells during oogenesis; nuclear isoforms play a greater role in this than cytoplasmic isoforms. Required nonredundantly with isoform A/sqdA for dorsoventral pattern determination during oogenesis. May be important in somatic tissues. Its function is as follows. Required nonredundantly with isoform B/SqdS for dorsoventral pattern determination during oogenesis. Functionally, may lack a role in dorsoventral pattern determination during oogenesis. May be important in somatic tissues. The polypeptide is RNA-binding protein squid (Drosophila melanogaster (Fruit fly)).